The sequence spans 215 residues: Pyridoxine/pyridoxamine 5'-phosphate oxidase (215 aa).

Substrate is bound by residues 8-11 (RQEY) and Lys-66. Residues 61–66 (RIVLLK), 76–77 (YT), Arg-82, Lys-83, and Gln-105 contribute to the FMN site. Tyr-123 and Arg-127 together coordinate substrate. Residues 140-141 (QS) and Trp-186 contribute to the FMN site. Residue 192-194 (RLH) coordinates substrate. Position 196 (Arg-196) interacts with FMN.

The protein belongs to the pyridoxamine 5'-phosphate oxidase family. Homodimer. The cofactor is FMN.

It catalyses the reaction pyridoxamine 5'-phosphate + O2 + H2O = pyridoxal 5'-phosphate + H2O2 + NH4(+). The enzyme catalyses pyridoxine 5'-phosphate + O2 = pyridoxal 5'-phosphate + H2O2. It functions in the pathway cofactor metabolism; pyridoxal 5'-phosphate salvage; pyridoxal 5'-phosphate from pyridoxamine 5'-phosphate: step 1/1. Its pathway is cofactor metabolism; pyridoxal 5'-phosphate salvage; pyridoxal 5'-phosphate from pyridoxine 5'-phosphate: step 1/1. Its function is as follows. Catalyzes the oxidation of either pyridoxine 5'-phosphate (PNP) or pyridoxamine 5'-phosphate (PMP) into pyridoxal 5'-phosphate (PLP). The sequence is that of Pyridoxine/pyridoxamine 5'-phosphate oxidase from Salinibacter ruber (strain DSM 13855 / M31).